Reading from the N-terminus, the 2013-residue chain is MWILALSLFQSFANVFSEEPHSSLYFVNASLQEVVFASTSGTLVPCPAAGIPPVTLRWYLATGEEIYDVPGIRHVHPNGTLQIFPFPPSSFSTLIHDNTYYCTAENPSGKIRSQDVHIKAVLREPYTVRVEDQKTMRGNVAVFKCIIPSSVEAYVTVVSWEKDTVSLVSGSRFLITSTGALYIKDVQNEDGLYNYRCITRHRYTGETRQSNSARLFVSDPANSAPSILDGFDHRKAMAGQRVELPCKALGHPEPDYRWLKDNMPLELSGRFQKTVTGLLIENSRPSDSGSYVCEVSNRYGTAKVIGRLYVKQPLKATISPRKVKSSVGSQVSLSCSVTGNEDQELSWYRNGEILNPGKNVRITGLNHANLIMDHMVKSDGGAYQCFVRKDKLSAQDYVQVVLEDGTPKIISAFSEKVVSPAEPVSLVCNVKGTPLPTVTWTLDDDPILKGSGHRISQMITSEGNVVSYLNISSSQVRDGGVYRCTANNSAGVVLYQARINVRGPASIRPMKNITAIAGRDTYIHCRVIGYPYYSIKWYKNANLLPFNHRQVAFENNGTLKLSDVQKEVDEGEYTCNVLVQPQLSTSQSVHVTVKVPPFIQPFEFPRFSIGQRVFIPCVVVSGDLPITITWQKDGRPIPASLGVTIDNIDFTSSLRISNLSLMHNGNYTCIARNEAAAVEHQSQLIVRVPPKFVVQPRDQDGIYGKAVILNCSAEGYPVPTIVWKFSKGAGVPQFQPIALNGRIQVLSNGSLLIKHVVEEDSGYYLCKVSNDVGADVSKSMYLTVKIPAMITSYPNTTLATQGQRKEMSCTAHGEKPIIVRWEKEDRIINPEMARYLVSTKEVGEEVISTLQILPTVREDSGFFSCHAINSYGEDRGIIQLTVQEPPDPPEIEIKDVKARTITLRWTMGFDGNSPITGYDIECKNKSDSWDSAQRTKDVSPQLNSATIIDIHPSSTYSIRMYAKNRIGKSEPSNEITITADEAAPDGPPQEVHLEPTSSQSIRVTWKAPKKHLQNGIIRGYQIGYREYSTGGNFQFNIISIDTTGDSEVYTLDNLNKFTQYGLVVQACNRAGTGPSSQEIITTTLEDVPSYPPENVQAIATSPESISISWSTLSKEALNGILQGFRVIYWANLIDGELGEIKNVTTTQPSLELDGLEKYTNYSIQVLAFTRAGDGVRSEQIFTRTKEDVPGPPAGVKAAAASASMVFVSWLPPLKLNGIIRKYTVFCSHPYPTVISEFEASPDSFSYRIPNLSRNRQYSVWVVAVTSAGRGNSSEIITVEPLAKAPARILTFSGTVTTPWMKDIVLPCKAVGDPSPAVKWMKDSNGTPSLVTIDGRRSIFSNGSFVIRTVKAEDSGYYSCVANNNWGSDEIILNLQVQVPPDQPRLTVSKTTSSSITLSWLPGDNGGSSIRGYILQYSEDNSEQWGSFPISPSERSYRLENLKCGTWYKFTLTAQNGVGPGRISEIIEAKTLGKEPQFSKEQELFASINTTRVRLNLIGWNDGGCPITSFTLEYRPFGTTVWTTAQRTSLSKSYILYDLQEATWYELQMRVCNSAGCAEKQANFATLNYDGSTIPPLIKSVVQSEEGLTTNEGLKILVTISCILVGVLLLFVLLLVVRRRRREQRLKRLRDAKSLAEMLMSKNTRTSDTLSKQQQTLRMHIDIPRAQLLIEERDTMETIDDRSTVLLTDADFGEAAKQKSLTVTHTVHYQSVSQATGPLVDVSDARPGTNPTTRRNAKAGPTARNRYASQWTLNRPHPTISAHTLTTDWRLPTPRATGSVDKESDSYSVSPSQDTDRARSSMVSTESASSTYEELARAYEHAKMEEQLRHAKFTITECFISDTSSEQLTAGTNEYTDSLTSSTPSESGICRFTASPPKPQDGGRVVNMAVPKAHRPGDLIHLPPYLRMDFLLNRGAPGTSRDLSLGQACLEPQKSRTLKRPTVLEPTPMEASSSTSSTREGQQSWQQGAVATLPQREGAELGQAAKMSSSQESLLDSRGHLKGNNPYAKSYTLV.

Positions 1–17 (MWILALSLFQSFANVFS) are cleaved as a signal peptide. Residues 19 to 1594 (EPHSSLYFVN…EGLTTNEGLK (1576 aa)) are Extracellular-facing. 9 consecutive Ig-like C2-type domains span residues 20–119 (PHSS…VHIK), 125–216 (PYTV…ARLF), 225–305 (PSIL…AKVI), 313–401 (PLKA…VQVV), 407–500 (PKII…ARIN), 504–592 (PASI…VHVT), 596–685 (PPFI…SQLI), 690–783 (PKFV…MYLT), and 787–883 (PAMI…LTVQ). Cystine bridges form between Cys46–Cys102, Cys145–Cys197, Cys246–Cys293, Cys335–Cys385, Cys428–Cys484, Cys525–Cys575, Cys617–Cys669, Cys711–Cys766, and Cys809–Cys865. N-linked (GlcNAc...) asparagine glycosylation is present at Asn78. A glycan (N-linked (GlcNAc...) asparagine) is linked at Asn470. Residue Asn666 is glycosylated (N-linked (GlcNAc...) asparagine). 4 Fibronectin type-III domains span residues 885–982 (PPDP…ADEA), 987–1086 (PPQE…TLED), 1091–1187 (PPEN…TKED), and 1191–1285 (PPAG…AKAP). N-linked (GlcNAc...) asparagine glycosylation is found at Asn1160 and Asn1250. In terms of domain architecture, Ig-like C2-type 10 spans 1285-1377 (PARILTFSGT…DEIILNLQVQ (93 aa)). A disulfide bridge links Cys1307 with Cys1359. Fibronectin type-III domains follow at residues 1379–1473 (PPDQ…TLGK) and 1474–1575 (EPQF…TIPP). Residues 1595–1615 (ILVTISCILVGVLLLFVLLLV) form a helical membrane-spanning segment. Residues 1616–2013 (VRRRRREQRL…NPYAKSYTLV (398 aa)) are Cytoplasmic-facing. The segment at 1616-2013 (VRRRRREQRL…NPYAKSYTLV (398 aa)) is required for netrin-mediated axon repulsion of neuronal growth cones. Disordered regions lie at residues 1718–1809 (LVDV…SASS) and 1920–2013 (RDLS…YTLV). Low complexity predominate over residues 1799–1809 (SSMVSTESASS). A compositionally biased stretch (polar residues) spans 1949–1968 (EASSSTSSTREGQQSWQQGA).

Homodimer; mediates homophilic interactions to promote cell adhesion. Interacts with DCC; the interaction is abolished in response to NTN1. Interacts (via extracellular domain) with NTN1. Interacts (via extracellular domain) with UNC5C (via Ig-like C2-type domain). Interacts with PTK2. Interacts with FYN. Post-translationally, phosphorylated at tyrosine residues. Phosphorylation is enhanced by NTN1.

It is found in the cell membrane. It localises to the cell projection. The protein resides in the axon. The protein localises to the dendrite. Its subcellular location is the growth cone. It is found in the synapse. Its function is as follows. Cell adhesion molecule that plays a role in neuronal self-avoidance. Promotes repulsion between specific neuronal processes of either the same cell or the same subtype of cells. Mediates within retinal amacrine and ganglion cell subtypes both isoneuronal self-avoidance for creating an orderly dendritic arborization and heteroneuronal self-avoidance to maintain the mosaic spacing between amacrine and ganglion cell bodies. Receptor for netrin required for axon guidance independently of and in collaboration with the receptor DCC. Might also collaborate with UNC5C in NTN1-mediated axon repulsion independently of DCC. In spinal cord development plays a role in guiding commissural axons projection and pathfinding across the ventral midline to reach the floor plate upon ligand binding. Mediates intracellular signaling by stimulating the activation of MAPK8 and MAP kinase p38. Adhesion molecule that promotes lamina-specific synaptic connections in the retina: expressed in specific subsets of interneurons and retinal ganglion cells (RGCs) and promotes synaptic connectivity via homophilic interactions. This is Cell adhesion molecule DSCAM (Dscam) from Rattus norvegicus (Rat).